The primary structure comprises 413 residues: Inactive serine protease 35 (413 aa).

An N-terminal signal peptide occupies residues 1–16; it reads MENMLLWLIFFTPGWT. Asn90 carries N-linked (GlcNAc...) asparagine glycosylation. The 285-residue stretch at 124 to 408 folds into the Peptidase S1 domain; sequence VYGTDSRFSI…ICLWIHGNDA (285 aa). An intrachain disulfide couples Cys154 to Cys170. A compositionally biased stretch (basic residues) spans 191–207; it reads MRNKSGGKKRRGSKRSR. A disordered region spans residues 191-250; that stretch reads MRNKSGGKKRRGSKRSRREASGGDQREGTREHLRERAKGGRRRKKSGRGQRIAEGRPSFQ. A compositionally biased stretch (basic and acidic residues) spans 208-228; that stretch reads REASGGDQREGTREHLRERAK. Residues 229 to 238 show a composition bias toward basic residues; the sequence is GGRRRKKSGR.

The protein belongs to the peptidase S1 family.

Its subcellular location is the secreted. The chain is Inactive serine protease 35 (PRSS35) from Homo sapiens (Human).